A 163-amino-acid polypeptide reads, in one-letter code: uncharacterized protein (163 aa).

The segment at 23-113 (DFPEEPPLWV…QVADGVHSQQ (91 aa)) is disordered. Ser-102 bears the Phosphoserine mark.

This is an uncharacterized protein from Mus musculus (Mouse).